The sequence spans 313 residues: Aspartate carbamoyltransferase catalytic subunit (313 aa).

Residues arginine 55 and threonine 56 each contribute to the carbamoyl phosphate site. Residue lysine 83 coordinates L-aspartate. Carbamoyl phosphate is bound by residues arginine 105, histidine 138, and glutamine 141. L-aspartate is bound by residues arginine 171 and arginine 225. The carbamoyl phosphate site is built by glycine 266 and proline 267.

Belongs to the aspartate/ornithine carbamoyltransferase superfamily. ATCase family. In terms of assembly, heterododecamer (2C3:3R2) of six catalytic PyrB chains organized as two trimers (C3), and six regulatory PyrI chains organized as three dimers (R2).

The catalysed reaction is carbamoyl phosphate + L-aspartate = N-carbamoyl-L-aspartate + phosphate + H(+). It functions in the pathway pyrimidine metabolism; UMP biosynthesis via de novo pathway; (S)-dihydroorotate from bicarbonate: step 2/3. In terms of biological role, catalyzes the condensation of carbamoyl phosphate and aspartate to form carbamoyl aspartate and inorganic phosphate, the committed step in the de novo pyrimidine nucleotide biosynthesis pathway. This chain is Aspartate carbamoyltransferase catalytic subunit, found in Corynebacterium diphtheriae (strain ATCC 700971 / NCTC 13129 / Biotype gravis).